A 425-amino-acid chain; its full sequence is Serine--tRNA ligase (425 aa).

231–233 is an L-serine binding site; the sequence is TAE. Residue 262 to 264 coordinates ATP; the sequence is RSE. Glu285 serves as a coordination point for L-serine. 349–352 lines the ATP pocket; the sequence is EISS. An L-serine-binding site is contributed by Ser385.

Belongs to the class-II aminoacyl-tRNA synthetase family. Type-1 seryl-tRNA synthetase subfamily. As to quaternary structure, homodimer. The tRNA molecule binds across the dimer.

The protein localises to the cytoplasm. It catalyses the reaction tRNA(Ser) + L-serine + ATP = L-seryl-tRNA(Ser) + AMP + diphosphate + H(+). The catalysed reaction is tRNA(Sec) + L-serine + ATP = L-seryl-tRNA(Sec) + AMP + diphosphate + H(+). Its pathway is aminoacyl-tRNA biosynthesis; selenocysteinyl-tRNA(Sec) biosynthesis; L-seryl-tRNA(Sec) from L-serine and tRNA(Sec): step 1/1. Functionally, catalyzes the attachment of serine to tRNA(Ser). Is also able to aminoacylate tRNA(Sec) with serine, to form the misacylated tRNA L-seryl-tRNA(Sec), which will be further converted into selenocysteinyl-tRNA(Sec). This chain is Serine--tRNA ligase, found in Bacillus velezensis (strain DSM 23117 / BGSC 10A6 / LMG 26770 / FZB42) (Bacillus amyloliquefaciens subsp. plantarum).